A 35-amino-acid chain; its full sequence is Pheromone-binding protein 1 (35 aa).

Belongs to the PBP/GOBP family. In terms of assembly, homodimer. Antenna.

Its function is as follows. This major soluble protein in olfactory sensilla of male moths might serve to solubilize the extremely hydrophobic pheromone molecules and to transport pheromone through the aqueous lymph to receptors located on olfactory cilia. The polypeptide is Pheromone-binding protein 1 (Lymantria dispar (Gypsy moth)).